The primary structure comprises 416 residues: Enolase (416 aa).

Gln160 serves as a coordination point for (2R)-2-phosphoglycerate. The Proton donor role is filled by Glu204. Mg(2+) contacts are provided by Asp239, Glu280, and Asp306. Lys331, Arg360, Ser361, and Lys382 together coordinate (2R)-2-phosphoglycerate. Catalysis depends on Lys331, which acts as the Proton acceptor.

The protein belongs to the enolase family. Mg(2+) is required as a cofactor.

The protein localises to the cytoplasm. Its subcellular location is the secreted. It localises to the cell surface. The enzyme catalyses (2R)-2-phosphoglycerate = phosphoenolpyruvate + H2O. Its pathway is carbohydrate degradation; glycolysis; pyruvate from D-glyceraldehyde 3-phosphate: step 4/5. Catalyzes the reversible conversion of 2-phosphoglycerate (2-PG) into phosphoenolpyruvate (PEP). It is essential for the degradation of carbohydrates via glycolysis. The polypeptide is Enolase (Sulfolobus acidocaldarius (strain ATCC 33909 / DSM 639 / JCM 8929 / NBRC 15157 / NCIMB 11770)).